The chain runs to 100 residues: Urease subunit gamma (100 aa).

It belongs to the urease gamma subunit family. Heterotrimer of UreA (gamma), UreB (beta) and UreC (alpha) subunits. Three heterotrimers associate to form the active enzyme.

Its subcellular location is the cytoplasm. The catalysed reaction is urea + 2 H2O + H(+) = hydrogencarbonate + 2 NH4(+). The protein operates within nitrogen metabolism; urea degradation; CO(2) and NH(3) from urea (urease route): step 1/1. In Methylibium petroleiphilum (strain ATCC BAA-1232 / LMG 22953 / PM1), this protein is Urease subunit gamma.